The following is a 292-amino-acid chain: Small ribosomal subunit protein uS2 (292 aa).

Residues 265 to 292 (TETALDWSDEPVAGDWAAEPAADAQGGW) are disordered. The span at 277-292 (AGDWAAEPAADAQGGW) shows a compositional bias: low complexity.

This sequence belongs to the universal ribosomal protein uS2 family. In terms of assembly, component of the small ribosomal subunit. Mature ribosomes consist of a small (40S) and a large (60S) subunit. The 40S subunit contains about 33 different proteins and 1 molecule of RNA (18S). The 60S subunit contains about 49 different proteins and 3 molecules of RNA (25S, 5.8S and 5S). Interacts with RPS21.

It is found in the cytoplasm. In terms of biological role, required for the assembly and/or stability of the 40S ribosomal subunit. Required for the processing of the 20S rRNA-precursor to mature 18S rRNA in a late step of the maturation of 40S ribosomal subunits. The polypeptide is Small ribosomal subunit protein uS2 (Cryptococcus neoformans var. neoformans serotype D (strain B-3501A) (Filobasidiella neoformans)).